We begin with the raw amino-acid sequence, 452 residues long: MAKGEWKRSGADDLPLPGRSECEVFDDGTNTFFWRAHTVTVLFILTCALVYVTLLEETPHDTAYNTKRGIVASILVFLCFGVTQAKDGPFTRPHPAYWRFWLCVSVVYELFLIFILFQTVHDGRQFMKYIDPKLGVPLPERGYGGNCLIYDPGHPTDPFHNIWDKMDGFVPAHFLGWYIKTLMIRDWWMCMIISVMFEFLEYSLEHQLPNFSECWWDHWIMDVLVCNGLGIYCGMKTLGWLSMKPYQWQGLWNIPTYKGKIKRIAFQFTPYSWVKFEWRPASNLRRWLAVLGIIFMFLLAELNTFYLKFVMWMPPEHYLVLFRLVFFVNVGGVAMREIYDFMDDPKFHKKLGQQAWIVAAITVTEFLIVVKYDPNTIMLPIPFFITQCWILGIALILVWTLWRFFIRDITLRYKETRRRRQEVSSERDGSSSAPSGRSKLNGSMDSVRHRKS.

Residues 1–35 are Cytoplasmic-facing; it reads MAKGEWKRSGADDLPLPGRSECEVFDDGTNTFFWR. The chain crosses the membrane as a helical span at residues 36–56; the sequence is AHTVTVLFILTCALVYVTLLE. Topologically, residues 57–69 are lumenal; the sequence is ETPHDTAYNTKRG. A helical transmembrane segment spans residues 70–90; sequence IVASILVFLCFGVTQAKDGPF. Over 91–99 the chain is Cytoplasmic; that stretch reads TRPHPAYWR. The helical transmembrane segment at 100-120 threads the bilayer; that stretch reads FWLCVSVVYELFLIFILFQTV. Over 121-286 the chain is Lumenal; it reads HDGRQFMKYI…EWRPASNLRR (166 aa). Residues 287–307 traverse the membrane as a helical segment; sequence WLAVLGIIFMFLLAELNTFYL. Residue Lys-308 is a topological domain, cytoplasmic. The chain crosses the membrane as a helical span at residues 309 to 329; that stretch reads FVMWMPPEHYLVLFRLVFFVN. Residues 330–349 are Lumenal-facing; that stretch reads VGGVAMREIYDFMDDPKFHK. The helical transmembrane segment at 350-370 threads the bilayer; that stretch reads KLGQQAWIVAAITVTEFLIVV. The Cytoplasmic portion of the chain corresponds to 371-376; the sequence is KYDPNT. A helical transmembrane segment spans residues 377–397; sequence IMLPIPFFITQCWILGIALIL. Over 398–452 the chain is Lumenal; that stretch reads VWTLWRFFIRDITLRYKETRRRRQEVSSERDGSSSAPSGRSKLNGSMDSVRHRKS. A disordered region spans residues 419–452; the sequence is RRQEVSSERDGSSSAPSGRSKLNGSMDSVRHRKS. Polar residues predominate over residues 430-444; the sequence is SSSAPSGRSKLNGSM.

It belongs to the phosphatidyl serine synthase family.

It localises to the endoplasmic reticulum membrane. It carries out the reaction a 1,2-diacyl-sn-glycero-3-phosphoethanolamine + L-serine = a 1,2-diacyl-sn-glycero-3-phospho-L-serine + ethanolamine. The enzyme catalyses 1-hexadecanoyl-2-(9Z-octadecenoyl)-sn-glycero-3-phosphoethanolamine + L-serine = 1-hexadecanoyl-2-(9Z-octadecenoyl)-sn-glycero-3-phospho-L-serine + ethanolamine. It catalyses the reaction 1-hexadecanoyl-2-(4Z,7Z,10Z,13Z,16Z,19Z-docosahexaenoyl)-sn-glycero-3-phosphoethanolamine + L-serine = 1-hexadecanoyl-2-(4Z,7Z,10Z,13Z,16Z,19Z-docosahexaenoyl)-sn-glycero-3-phosphoserine + ethanolamine. The catalysed reaction is 1-octadecanoyl-2-(5Z,8Z,11Z,14Z)-eicosatetraenoyl-sn-glycero-3-phosphoethanolamine + L-serine = 1-octadecanoyl-2-(5Z,8Z,11Z,14Z)-eicosatetraenoyl-sn-glycero-3-phosphoserine + ethanolamine. It carries out the reaction 1-octadecanoyl-2-(4Z,7Z,10Z,13Z,16Z,19Z-docosahexaenoyl)-sn-glycero-3-phosphoethanolamine + L-serine = 1-octadecanoyl-2-(4Z,7Z,10Z,13Z,16Z,19Z-docosahexaenoyl)-sn-glycero-3-phosphoserine + ethanolamine. The enzyme catalyses 1-(1Z-octadecenyl)-2-(4Z,7Z,10Z,13Z,16Z,19Z-docosahexaenoyl)-sn-glycero-3-phosphoethanolamine + L-serine = 1-(1Z-octadecenyl)-2-(4Z,7Z,10Z,13Z,16Z,19Z-docosahexaenoyl)-sn-glycero-3-phospho-L-serine + ethanolamine. It catalyses the reaction 1-octadecanoyl-2-(9Z-octadecenoyl)-sn-glycero-3-phosphoethanolamine + L-serine = 1-octadecanoyl-2-(9Z-octadecenoyl)-sn-glycero-3-phospho-L-serine + ethanolamine. The catalysed reaction is 1-(1Z-octadecenyl)-2-(9Z-octadecenoyl)-sn-glycero-3-phosphoethanolamine + L-serine = 1-(1Z-octadecenyl)-2-(9Z-octadecenoyl)-sn-glycero-3-phospho-L-serine + ethanolamine. It carries out the reaction 1-(1Z-octadecenyl)-2-(5Z,8Z,11Z,14Z- eicosatetraenoyl)-sn-glycero-3-phosphoethanolamine + L-serine = 1-(1Z-octadecenyl)-2-(5Z,8Z,11Z,14Z-eicosatetraenoyl)-sn-glycero-3-phospho-L-serine + ethanolamine. It participates in phospholipid metabolism; phosphatidylserine biosynthesis. Its function is as follows. Catalyzes a base-exchange reaction in which the polar head group of phosphatidylethanolamine (PE) or phosphatidylcholine (PC) is replaced by L-serine. Catalyzes the conversion of phosphatatidylethanolamine and does not act on phosphatidylcholine. Can utilize both phosphatidylethanolamine (PE) plasmalogen and diacyl PE as substrate and the latter is six times better utilized, indicating the importance of an ester linkage at the sn-1 position. Although it shows no sn-1 fatty acyl preference, exhibits significant preference towards docosahexaenoic acid (22:6n-3) compared with 18:1 or 20:4 at the sn-2 position. In Danio rerio (Zebrafish), this protein is Phosphatidylserine synthase 2 (ptdss2).